Reading from the N-terminus, the 194-residue chain is FMN-dependent NADH:quinone oxidoreductase (194 aa).

Residues serine 10 and 90–93 each bind FMN; that span reads MYNL.

Belongs to the azoreductase type 1 family. In terms of assembly, homodimer. FMN is required as a cofactor.

The enzyme catalyses 2 a quinone + NADH + H(+) = 2 a 1,4-benzosemiquinone + NAD(+). It catalyses the reaction N,N-dimethyl-1,4-phenylenediamine + anthranilate + 2 NAD(+) = 2-(4-dimethylaminophenyl)diazenylbenzoate + 2 NADH + 2 H(+). Its function is as follows. Quinone reductase that provides resistance to thiol-specific stress caused by electrophilic quinones. Also exhibits azoreductase activity. Catalyzes the reductive cleavage of the azo bond in aromatic azo compounds to the corresponding amines. This Haemophilus influenzae (strain ATCC 51907 / DSM 11121 / KW20 / Rd) protein is FMN-dependent NADH:quinone oxidoreductase.